Here is a 354-residue protein sequence, read N- to C-terminus: Uroporphyrinogen decarboxylase (354 aa).

Residues 27–31 (RQAGR), Asp77, Tyr154, Thr209, and His327 each bind substrate.

It belongs to the uroporphyrinogen decarboxylase family. In terms of assembly, homodimer.

Its subcellular location is the cytoplasm. It carries out the reaction uroporphyrinogen III + 4 H(+) = coproporphyrinogen III + 4 CO2. It participates in porphyrin-containing compound metabolism; protoporphyrin-IX biosynthesis; coproporphyrinogen-III from 5-aminolevulinate: step 4/4. Its function is as follows. Catalyzes the decarboxylation of four acetate groups of uroporphyrinogen-III to yield coproporphyrinogen-III. The sequence is that of Uroporphyrinogen decarboxylase from Escherichia coli (strain 55989 / EAEC).